Here is a 650-residue protein sequence, read N- to C-terminus: Probable ATP-dependent RNA helicase DDX17 (650 aa).

Residues 1–38 (MRGGGFGDRDRDRDRGGFGARGGSGLPPKKFGNPGERL) form a disordered region. Residues 7–16 (GDRDRDRDRG) are compositionally biased toward basic and acidic residues. 3 positions are modified to N6-acetyllysine: lysine 29, lysine 30, and lysine 42. Residue lysine 50 forms a Glycyl lysine isopeptide (Lys-Gly) (interchain with G-Cter in SUMO); alternate linkage. Lysine 50 is covalently cross-linked (Glycyl lysine isopeptide (Lys-Gly) (interchain with G-Cter in SUMO1); alternate). Residue lysine 50 forms a Glycyl lysine isopeptide (Lys-Gly) (interchain with G-Cter in SUMO2); alternate linkage. The Q motif signature appears at 92 to 120 (FAFHHANFPQYVMDVLMDQHFTEPTPIQC). Residues 123 to 298 (FPLALSGRDM…EDFLRDYTQI (176 aa)) enclose the Helicase ATP-binding domain. 136–143 (AQTGSGKT) is an ATP binding site. The DEAD box motif lies at 246 to 249 (DEAD). Positions 326 to 473 (KLIQLMEEIM…AINPKLMQLV (148 aa)) constitute a Helicase C-terminal domain. Threonine 444 carries the phosphothreonine modification. A Glycyl lysine isopeptide (Lys-Gly) (interchain with G-Cter in SUMO2) cross-link involves residue lysine 449. Positions 468 to 650 (KLMQLVDHRG…PPPPPPPSRK (183 aa)) are transactivation domain. Disordered stretches follow at residues 472-543 (LVDH…YGSP) and 583-650 (ASST…PSRK). Positions 489–499 (RTTSSANNPNL) are enriched in polar residues. The span at 504-531 (ECDRRLRGVKDGGRRDSTSYRDRSETDR) shows a compositional bias: basic and acidic residues. The span at 583-609 (ASSTASAGRSSQSSSQQFSGIGRSGQQ) shows a compositional bias: low complexity. Omega-N-methylarginine is present on arginine 605. A compositionally biased stretch (polar residues) spans 610–619 (PQPLMSQQFA). Positions 638–650 (YPPPPPPPPPSRK) are enriched in pro residues. An interaction with YAP1 region spans residues 639-647 (PPPPPPPPP).

It belongs to the DEAD box helicase family. DDX5/DBP2 subfamily. As to quaternary structure, interacts with DDX5 in an RNA-independent manner. Interacts with CDK9 transcription elongation complex under basal conditions. Following cell stimulation with poly(I:C), a synthetic double-stranded RNA mimicking viral infection, the interaction with CDK9 is decreased. Interacts with ESR1 in an estrogen-independent manner. Interacts with HNRNPH1; this interaction is important for the regulation of alternative splicing on G-quadruplex structures. At high, but not low, cell density, interacts with DROSHA and DGCR8, the core components of the microprocessor complex involved in the maturation of primary microRNAs (pri-miRNAs) into pre-miRNAs. The interaction with DGCR8 is reduced during mitosis. At low, but not high, cell density, interacts with YAP1 and with its paralog, WWTR1/TAZ. Interactions with DROSHA and YAP1 are mutually exclusive. In vitro, the pre-miRNA processing activity of the DDX17-containing microprocessor complex is weaker than that of the DROSHA/DGCR8 microprocessor complex. Interacts with UPF3B. Interacts with NFAT5; this interaction leads to DDX17 recruitment to LNC2 and S100A4 promoters and NFAT5-mediated DDX17-enhanced transactivation. Interacts with HDAC1, HDAC2 and HDAC3; this interaction with HDAC1 and HDAC3, but not HDAC2, depends upon DDX17 acetylation. Interacts with ZC3HAV1 (via N-terminal domain) in an RNA-independent manner. Interacts with EXOSC3/RRP40 and EXOSC5/RRP46; this interaction may be indirect and mediated by ZC3HAV1-binding. Interacts with EP300; this interaction leads to acetylation at lysine residues. Interacts with CREBBP/CBP and KAT2B/P/CAF. Directly interacts with CTNNB1. Interacts with MYOD1. Interacts with TP53. Interacts with DCP1A in an RNA-independent manner. Interacts with DCP2 in an RNA-dependent manner. Interacts with DHX36; this interaction occurs in a RNA-dependent manner. Interacts with ERCC6. Sumoylation significantly increases stability. It also promotes interaction specifically with HDAC1 (but not HDAC2, nor HDAC3) and strongly stimulates ESR1 and TP53 coactivation. Post-translationally, acetylation at lysine residues stabilizes the protein, stimulates interaction with HDAC1 and HDAC3, but not HDAC2, and represses ESR1 and TP53 coactivation activity.

It localises to the nucleus. Its subcellular location is the nucleolus. The protein localises to the cytoplasm. It is found in the cytosol. It carries out the reaction ATP + H2O = ADP + phosphate + H(+). In terms of biological role, as an RNA helicase, unwinds RNA and alters RNA structures through ATP binding and hydrolysis. Involved in multiple cellular processes, including pre-mRNA splicing, alternative splicing, ribosomal RNA processing and miRNA processing, as well as transcription regulation. Regulates the alternative splicing of exons exhibiting specific features. This function requires the RNA helicase activity. Affects NFAT5 and histone macro-H2A.1/MACROH2A1 alternative splicing in a CDK9-dependent manner. Affects splicing of mediators of steroid hormone signaling pathway, including kinases that phosphorylates ESR1 and transcriptional regulators. By acting splicing of regulatory factors, participates in ESR1 and AR stabilization. Promotes the inclusion of specific AC-rich alternative exons in CD44 transcripts. In myoblasts and epithelial cells, cooperates with HNRNPH1 to control the splicing of specific subsets of exons. In addition to binding mature mRNAs, also interacts with certain pri-microRNAs, including MIR132/miR-132, and stabilizes the primary transcript. Also participates in the MIR132 processing, resulting in significantly higher levels of mature MIR132 than MIR212 despite the fact that both are cotranscribed and co-regulated. Binding of pri-microRNAs may occur on the 3' segment flanking the stem loop via the 5'-[ACG]CAUC[ACU]-3' consensus sequence. Participates in MYC down-regulation at high cell density through the production of MYC-targeting microRNAs. Along with DDX5, may be involved in the processing of the 32S intermediate into the mature 28S rRNA. Promoter-specific transcription regulator, functioning as a coactivator or corepressor depending on the context of the promoter and the transcriptional complex in which it exists. Enhances NFAT5 transcriptional activity. Synergizes with TP53 in the activation of the MDM2 promoter; this activity requires acetylation on lysine residues. May also coactivate MDM2 transcription through a TP53-independent pathway. Coactivates MMP7 transcription. Along with CTNNB1, coactivates MYC, JUN, FOSL1 and cyclin D1/CCND1 transcription. Alone or in combination with DDX5 and/or SRA1 non-coding RNA, plays a critical role in promoting the assembly of proteins required for the formation of the transcription initiation complex and chromatin remodeling leading to coactivation of MYOD1-dependent transcription. This helicase-independent activity is required for skeletal muscle cells to properly differentiate into myotubes. During epithelial-to-mesenchymal transition, coregulates SMAD-dependent transcriptional activity, directly controlling key effectors of differentiation, including miRNAs which in turn directly repress its expression. Plays a role in estrogen and testosterone signaling pathway at several levels. Mediates the use of alternative promoters in estrogen-responsive genes and regulates transcription and splicing of a large number of steroid hormone target genes. Contrary to the splicing regulation activity, transcriptional coregulation of the estrogen receptor ESR1 is helicase activity-independent. Plays a role in innate immunity. Specifically restricts bunyavirus infection, including Rift Valley fever virus (RVFV) or La Crosse virus (LACV), but not vesicular stomatitis virus (VSV), in an interferon- and DROSHA-independent manner. Binds to RVFV RNA, likely via structured viral RNA elements. Promotes mRNA degradation mediated by the antiviral zinc-finger protein ZC3HAV1, in an ATPase-dependent manner. The protein is Probable ATP-dependent RNA helicase DDX17 (Ddx17) of Mus musculus (Mouse).